A 582-amino-acid polypeptide reads, in one-letter code: L-fucose isomerase (582 aa).

Active-site proton acceptor residues include Glu333 and Asp357. Residues Glu333, Asp357, and His520 each coordinate Mn(2+).

It belongs to the L-fucose isomerase family. Requires Mn(2+) as cofactor.

It is found in the cytoplasm. The catalysed reaction is L-fucose = L-fuculose. The protein operates within carbohydrate degradation; L-fucose degradation; L-lactaldehyde and glycerone phosphate from L-fucose: step 1/3. Converts the aldose L-fucose into the corresponding ketose L-fuculose. This is L-fucose isomerase from Vibrio vulnificus (strain YJ016).